The sequence spans 289 residues: F-actin-capping protein subunit beta (289 aa).

The interval 73–110 (RSPWSNQFDPPLEGGNQGGSGGDGEGDGGEGGAAGSIM) is disordered. Positions 87-106 (GNQGGSGGDGEGDGGEGGAA) are enriched in gly residues.

It belongs to the F-actin-capping protein beta subunit family. In terms of assembly, component of the F-actin capping complex, composed of a heterodimer of an alpha and a beta subunit.

The protein localises to the cytoplasm. It is found in the cytoskeleton. The protein resides in the actin patch. Its function is as follows. F-actin-capping proteins bind in a Ca(2+)-independent manner to the fast growing ends of actin filaments (barbed end) thereby blocking the exchange of subunits at these ends. Unlike other capping proteins (such as gelsolin and severin), these proteins do not sever actin filaments. In Neurospora crassa (strain ATCC 24698 / 74-OR23-1A / CBS 708.71 / DSM 1257 / FGSC 987), this protein is F-actin-capping protein subunit beta (fac-2).